Reading from the N-terminus, the 232-residue chain is Dephospho-CoA kinase (232 aa).

The 204-residue stretch at 3-206 (IVGLTGGIAS…RPLTWIEFWR (204 aa)) folds into the DPCK domain. 8 to 15 (GGIASGKS) contributes to the ATP binding site.

Belongs to the CoaE family.

Its subcellular location is the peroxisome. The enzyme catalyses 3'-dephospho-CoA + ATP = ADP + CoA + H(+). It participates in cofactor biosynthesis; coenzyme A biosynthesis; CoA from (R)-pantothenate: step 5/5. Its function is as follows. Catalyzes the phosphorylation of the 3'-hydroxyl group of dephosphocoenzyme A to form coenzyme A. The polypeptide is Dephospho-CoA kinase (Arabidopsis thaliana (Mouse-ear cress)).